We begin with the raw amino-acid sequence, 95 residues long: Aspartyl/glutamyl-tRNA(Asn/Gln) amidotransferase subunit C (95 aa).

This sequence belongs to the GatC family. As to quaternary structure, heterotrimer of A, B and C subunits.

The catalysed reaction is L-glutamyl-tRNA(Gln) + L-glutamine + ATP + H2O = L-glutaminyl-tRNA(Gln) + L-glutamate + ADP + phosphate + H(+). It carries out the reaction L-aspartyl-tRNA(Asn) + L-glutamine + ATP + H2O = L-asparaginyl-tRNA(Asn) + L-glutamate + ADP + phosphate + 2 H(+). Functionally, allows the formation of correctly charged Asn-tRNA(Asn) or Gln-tRNA(Gln) through the transamidation of misacylated Asp-tRNA(Asn) or Glu-tRNA(Gln) in organisms which lack either or both of asparaginyl-tRNA or glutaminyl-tRNA synthetases. The reaction takes place in the presence of glutamine and ATP through an activated phospho-Asp-tRNA(Asn) or phospho-Glu-tRNA(Gln). This chain is Aspartyl/glutamyl-tRNA(Asn/Gln) amidotransferase subunit C, found in Methylobacterium radiotolerans (strain ATCC 27329 / DSM 1819 / JCM 2831 / NBRC 15690 / NCIMB 10815 / 0-1).